A 43-amino-acid chain; its full sequence is Protein PsbN (43 aa).

Residues Val-7–Phe-27 traverse the membrane as a helical segment.

Belongs to the PsbN family.

Its subcellular location is the plastid. It is found in the chloroplast thylakoid membrane. In terms of biological role, may play a role in photosystem I and II biogenesis. The polypeptide is Protein PsbN (Daucus carota (Wild carrot)).